Consider the following 637-residue polypeptide: Probable potassium transport system protein Kup 2 (637 aa).

A run of 12 helical transmembrane segments spans residues 18 to 38 (FLVLLLGSIGVVYGDIGTSPL), 61 to 81 (LISLMIWTLTIIVTFKYVLFL), 107 to 127 (MPVLFFAGLIGSALFIGDAMI), 145 to 165 (PAFSDYVLPLSALIMVGLFAV), 174 to 194 (AVFFGPITVVWFLAMAWGGLI), 211 to 231 (ALWFITHAGWAGLIVLGAVFL), 255 to 275 (WFILVFPALALNYLGQGALVL), 293 to 313 (ALFPMIILATMATVIASQAVI), 345 to 365 (IYVPAVNMVLFIGVLVLIFSF), 371 to 391 (LATAYGISVTGAMVVTTLMAF), 402 to 422 (AFTAAILLAPLFSIEAVFLAA), and 429 to 449 (DGGWVPLALAGVIILVMWTWT).

It belongs to the HAK/KUP transporter (TC 2.A.72) family.

It localises to the cell inner membrane. The catalysed reaction is K(+)(in) + H(+)(in) = K(+)(out) + H(+)(out). Its function is as follows. Transport of potassium into the cell. Likely operates as a K(+):H(+) symporter. The polypeptide is Probable potassium transport system protein Kup 2 (Agrobacterium fabrum (strain C58 / ATCC 33970) (Agrobacterium tumefaciens (strain C58))).